We begin with the raw amino-acid sequence, 357 residues long: tRNA N6-adenosine threonylcarbamoyltransferase (357 aa).

Positions 113 and 117 each coordinate Fe cation. Residues 136-140, Asp-169, Gly-182, and Asn-288 contribute to the substrate site; that span reads LVSGG. Asp-316 is a binding site for Fe cation.

The protein belongs to the KAE1 / TsaD family. Fe(2+) serves as cofactor.

Its subcellular location is the cytoplasm. It catalyses the reaction L-threonylcarbamoyladenylate + adenosine(37) in tRNA = N(6)-L-threonylcarbamoyladenosine(37) in tRNA + AMP + H(+). Its function is as follows. Required for the formation of a threonylcarbamoyl group on adenosine at position 37 (t(6)A37) in tRNAs that read codons beginning with adenine. Is involved in the transfer of the threonylcarbamoyl moiety of threonylcarbamoyl-AMP (TC-AMP) to the N6 group of A37, together with TsaE and TsaB. TsaD likely plays a direct catalytic role in this reaction. The polypeptide is tRNA N6-adenosine threonylcarbamoyltransferase (Gemmatimonas aurantiaca (strain DSM 14586 / JCM 11422 / NBRC 100505 / T-27)).